Reading from the N-terminus, the 159-residue chain is Large ribosomal subunit protein uL22 (159 aa).

Belongs to the universal ribosomal protein uL22 family. In terms of assembly, part of the 50S ribosomal subunit.

Its function is as follows. This protein binds specifically to 23S rRNA. It makes multiple contacts with different domains of the 23S rRNA in the assembled 50S subunit and ribosome. Functionally, the globular domain of the protein is located near the polypeptide exit tunnel on the outside of the subunit, while an extended beta-hairpin is found that lines the wall of the exit tunnel in the center of the 70S ribosome. In Methanopyrus kandleri (strain AV19 / DSM 6324 / JCM 9639 / NBRC 100938), this protein is Large ribosomal subunit protein uL22.